A 961-amino-acid polypeptide reads, in one-letter code: Gamma-tubulin small complex component GCP2 (961 aa).

The interval Asn15–Glu76 is disordered. A compositionally biased stretch (polar residues) spans Leu43–Ser54. Over residues Ser55–Asp65 the composition is skewed to basic and acidic residues.

This sequence belongs to the TUBGCP family. In terms of assembly, component of the gamma-tubulin small complex (gamma-TuSC) composed of tubulin gamma chain, gamma-tubulin complex protein 2 (GCP2) and gamma-tubulin complex protein 3 (GCP3). Interacts with tubulin gamma chain.

Its subcellular location is the cytoplasm. The protein resides in the cytoskeleton. The protein localises to the flagellum axoneme. It localises to the flagellum basal body. In terms of biological role, component of the gamma-tubulin small complex (gamma-TuSC) involved in microtubule (MT) nucleation for the formation of median bodies and in the biogenesis of flagella. Gamma-TuSC may be required for the correct positioning of EB1 within the trophozoites. The sequence is that of Gamma-tubulin small complex component GCP2 from Giardia intestinalis (strain ATCC 50803 / WB clone C6) (Giardia lamblia).